The chain runs to 472 residues: Glutamate--tRNA ligase (472 aa).

Residues 9–19 (PSPTGPLHIGS) carry the 'HIGH' region motif. A 'KMSKS' region motif is present at residues 237–241 (KLSKR). K240 serves as a coordination point for ATP.

The protein belongs to the class-I aminoacyl-tRNA synthetase family. Glutamate--tRNA ligase type 1 subfamily. As to quaternary structure, monomer.

The protein resides in the cytoplasm. It catalyses the reaction tRNA(Glu) + L-glutamate + ATP = L-glutamyl-tRNA(Glu) + AMP + diphosphate. Its function is as follows. Catalyzes the attachment of glutamate to tRNA(Glu) in a two-step reaction: glutamate is first activated by ATP to form Glu-AMP and then transferred to the acceptor end of tRNA(Glu). The protein is Glutamate--tRNA ligase of Buchnera aphidicola subsp. Baizongia pistaciae (strain Bp).